Consider the following 543-residue polypeptide: MLKKNDIVEVEIVDLTHEGAGVAKVDGLVFFVENALPSEKILMRVLKVNKKIGFGKVEKYLVQSPHRNQDLDLAYLRSGIADLGHLSYPEQLKFKTKQVKDSLYKIAGIADVEVAETLGMEHPVKYRNKAQVPVRRVNGVLETGFFRKNSHNLMPLEDFFIQDPVIDQVVVALRDLLRRFDLKPYDEKEQSGLIRNLVVRRGHYSGQIMVVLVTTRPKVFRVDQLIEQVIKQFPEIVSVMQNINDQNTNAIFGKEWRTLYGQDYITDQMLGNDFQIAGPAFYQVNTEMAEKLYQTAIDFAELKKDDVIIDAYSGIGTIGLSVAKHVKEVYGVELIPEAVENSQKNASLNKITNAHYVCDTAENAMKKWLKEGIQPTVILVDPPRKGLTESFIKASAQTGADRIAYISCNVATMARDIKLYQELGYELKKVQPVDLFPQTHHVETVALLSKLDVDKHISVEIELDEMDLTSAESKATYAQIKEYVWNKFELKVSTLYIAQIKKKCGIELREHYNKSKKDKQIIPQCTPEKEEAIMDALRHFKMI.

A TRAM domain is found at 1–59 (MLKKNDIVEVEIVDLTHEGAGVAKVDGLVFFVENALPSEKILMRVLKVNKKIGFGKVEK). Residues Gln283, Tyr312, Glu333, and Asp381 each coordinate S-adenosyl-L-methionine. Catalysis depends on Cys408, which acts as the Nucleophile.

The protein belongs to the class I-like SAM-binding methyltransferase superfamily. RNA M5U methyltransferase family.

This is an uncharacterized protein from Streptococcus pneumoniae serotype 4 (strain ATCC BAA-334 / TIGR4).